Here is a 447-residue protein sequence, read N- to C-terminus: C4-dicarboxylate transport protein (447 aa).

8 helical membrane passes run 19-39 (ILYV…HFYP), 55-75 (LVKM…IAGL), 90-110 (IYFL…ANVV), 155-175 (AFAS…GIAL), 199-219 (LVAI…AFTI), 232-252 (MLVG…LGLV), 343-363 (LLLV…AGFI), and 366-386 (AATL…ILGV).

It belongs to the dicarboxylate/amino acid:cation symporter (DAACS) (TC 2.A.23) family.

The protein resides in the cell inner membrane. Functionally, responsible for the transport of dicarboxylates such as succinate, fumarate, and malate from the periplasm across the membrane. The polypeptide is C4-dicarboxylate transport protein (Rhodospirillum rubrum (strain ATCC 11170 / ATH 1.1.1 / DSM 467 / LMG 4362 / NCIMB 8255 / S1)).